A 342-amino-acid polypeptide reads, in one-letter code: Probable dual-specificity RNA methyltransferase RlmN (342 aa).

The Proton acceptor role is filled by Glu-91. The Radical SAM core domain maps to 97–327 (YKHGNSICVS…TTIRREMGAD (231 aa)). An intrachain disulfide couples Cys-104 to Cys-332. Positions 111, 115, and 118 each coordinate [4Fe-4S] cluster. S-adenosyl-L-methionine is bound by residues 158–159 (GE), Ser-190, 213–215 (SLH), and Asn-289. The S-methylcysteine intermediate role is filled by Cys-332.

The protein belongs to the radical SAM superfamily. RlmN family. [4Fe-4S] cluster is required as a cofactor.

Its subcellular location is the cytoplasm. It catalyses the reaction adenosine(2503) in 23S rRNA + 2 reduced [2Fe-2S]-[ferredoxin] + 2 S-adenosyl-L-methionine = 2-methyladenosine(2503) in 23S rRNA + 5'-deoxyadenosine + L-methionine + 2 oxidized [2Fe-2S]-[ferredoxin] + S-adenosyl-L-homocysteine. It carries out the reaction adenosine(37) in tRNA + 2 reduced [2Fe-2S]-[ferredoxin] + 2 S-adenosyl-L-methionine = 2-methyladenosine(37) in tRNA + 5'-deoxyadenosine + L-methionine + 2 oxidized [2Fe-2S]-[ferredoxin] + S-adenosyl-L-homocysteine. Specifically methylates position 2 of adenine 2503 in 23S rRNA and position 2 of adenine 37 in tRNAs. This is Probable dual-specificity RNA methyltransferase RlmN from Clostridium botulinum (strain Okra / Type B1).